A 1044-amino-acid chain; its full sequence is Eukaryotic translation initiation factor 3 subunit A (1044 aa).

Residues 92 to 121 (LKKFIELAEKKVTEAQAKADEIQSSLESAA) are a coiled coil. The region spanning 339-523 (MTKAASFVLL…GVLTFDTDIF (185 aa)) is the PCI domain. Residues 611 to 907 (IDKKKEAATD…EARRAARKAG (297 aa)) are a coiled coil. The span at 797-901 (SEKRHEEFEK…QREEEAEARR (105 aa)) shows a compositional bias: basic and acidic residues. The interval 797–1044 (SEKRHEEFEK…WVPRWKQQQS (248 aa)) is disordered. Low complexity-rich tracts occupy residues 943–956 (KEAA…AAPA) and 1006–1017 (SSSSQPPSRTQT).

Belongs to the eIF-3 subunit A family. As to quaternary structure, component of the eukaryotic translation initiation factor 3 (eIF-3) complex.

It is found in the cytoplasm. Its function is as follows. RNA-binding component of the eukaryotic translation initiation factor 3 (eIF-3) complex, which is involved in protein synthesis of a specialized repertoire of mRNAs and, together with other initiation factors, stimulates binding of mRNA and methionyl-tRNAi to the 40S ribosome. The eIF-3 complex specifically targets and initiates translation of a subset of mRNAs involved in cell proliferation. The polypeptide is Eukaryotic translation initiation factor 3 subunit A (tif32) (Aspergillus clavatus (strain ATCC 1007 / CBS 513.65 / DSM 816 / NCTC 3887 / NRRL 1 / QM 1276 / 107)).